A 92-amino-acid polypeptide reads, in one-letter code: Small ribosomal subunit protein uS19c (92 aa).

This sequence belongs to the universal ribosomal protein uS19 family.

It is found in the plastid. The protein localises to the chloroplast. Its function is as follows. Protein S19 forms a complex with S13 that binds strongly to the 16S ribosomal RNA. This is Small ribosomal subunit protein uS19c from Phaeodactylum tricornutum (strain CCAP 1055/1).